Consider the following 236-residue polypeptide: Probable 6-phosphogluconolactonase (236 aa).

This sequence belongs to the glucosamine/galactosamine-6-phosphate isomerase family. 6-phosphogluconolactonase subfamily.

The enzyme catalyses 6-phospho-D-glucono-1,5-lactone + H2O = 6-phospho-D-gluconate + H(+). The protein operates within carbohydrate degradation; pentose phosphate pathway; D-ribulose 5-phosphate from D-glucose 6-phosphate (oxidative stage): step 2/3. Hydrolysis of 6-phosphogluconolactone to 6-phosphogluconate. The polypeptide is Probable 6-phosphogluconolactonase (pgl) (Dictyostelium discoideum (Social amoeba)).